Consider the following 1399-residue polypeptide: DNA-directed RNA polymerase subunit beta' (1399 aa).

Zn(2+) contacts are provided by cysteine 70, cysteine 72, cysteine 85, and cysteine 88. The Mg(2+) site is built by aspartate 460, aspartate 462, and aspartate 464. Cysteine 814, cysteine 888, cysteine 895, and cysteine 898 together coordinate Zn(2+).

It belongs to the RNA polymerase beta' chain family. In terms of assembly, the RNAP catalytic core consists of 2 alpha, 1 beta, 1 beta' and 1 omega subunit. When a sigma factor is associated with the core the holoenzyme is formed, which can initiate transcription. It depends on Mg(2+) as a cofactor. Requires Zn(2+) as cofactor.

The catalysed reaction is RNA(n) + a ribonucleoside 5'-triphosphate = RNA(n+1) + diphosphate. DNA-dependent RNA polymerase catalyzes the transcription of DNA into RNA using the four ribonucleoside triphosphates as substrates. The polypeptide is DNA-directed RNA polymerase subunit beta' (Pseudomonas savastanoi pv. phaseolicola (strain 1448A / Race 6) (Pseudomonas syringae pv. phaseolicola (strain 1448A / Race 6))).